Consider the following 182-residue polypeptide: Large ribosomal subunit protein uL6 (182 aa).

This sequence belongs to the universal ribosomal protein uL6 family. Part of the 50S ribosomal subunit.

Its function is as follows. This protein binds to the 23S rRNA, and is important in its secondary structure. It is located near the subunit interface in the base of the L7/L12 stalk, and near the tRNA binding site of the peptidyltransferase center. This Trichormus variabilis (strain ATCC 29413 / PCC 7937) (Anabaena variabilis) protein is Large ribosomal subunit protein uL6.